The chain runs to 282 residues: MVTYALLGATGATGSSILRHLLHESPDSLRIQILVRSKVKLLQAFPNLQTTRNPQVHVIQGTSTDPDALSECLRNASIVFMCVAQNGSPIGTTLCQDSARAIISVLQQQQQSQGASYQPCTIVQLRSASLNPALAAQVPAFVHRIVSFCLFANYADIKKACQYYSQAQKQGILEYILVDPPTLHDANGTQPTGYRLISTESQATALSYADLGAAMCEIAHRQSEFHGRAVGVTATGRVRQAWGVLLRHLLEGGSARLREKIAQETVVDGVVFAFLVVLAYLM.

It belongs to the avfA family.

It functions in the pathway mycotoxin biosynthesis; aflatoxin biosynthesis. Involved in the conversion of averufin (AVF) to versiconal hemiacetal acetate (VHA) in the aflatoxin biosynthesis pathway. This Aspergillus flavus (strain ATCC 200026 / FGSC A1120 / IAM 13836 / NRRL 3357 / JCM 12722 / SRRC 167) protein is Averufin oxidase A (avfA).